A 187-amino-acid chain; its full sequence is Holliday junction resolvase (187 aa).

The protein belongs to the RuvC family. Poxviruses-type subfamily. Mg(2+) is required as a cofactor. Acylated by palmitic acid group(s).

The protein localises to the membrane. Nuclease that specifically cleaves and resolves four-way DNA Holliday junctions into linear duplex products. The chain is Holliday junction resolvase from Vaccinia virus (strain Ankara) (VACV).